The following is a 176-amino-acid chain: NAD(P)H-quinone oxidoreductase subunit 6, chloroplastic (176 aa).

The next 5 helical transmembrane spans lie at 10 to 30, 32 to 52, 61 to 81, 92 to 112, and 152 to 172; these read FLLV…VLLA, PIYS…FYIL, AQLL…VMFI, LWTV…VSLI, and FFIP…GAIA.

This sequence belongs to the complex I subunit 6 family. As to quaternary structure, NDH is composed of at least 16 different subunits, 5 of which are encoded in the nucleus.

It localises to the plastid. It is found in the chloroplast thylakoid membrane. The catalysed reaction is a plastoquinone + NADH + (n+1) H(+)(in) = a plastoquinol + NAD(+) + n H(+)(out). The enzyme catalyses a plastoquinone + NADPH + (n+1) H(+)(in) = a plastoquinol + NADP(+) + n H(+)(out). NDH shuttles electrons from NAD(P)H:plastoquinone, via FMN and iron-sulfur (Fe-S) centers, to quinones in the photosynthetic chain and possibly in a chloroplast respiratory chain. The immediate electron acceptor for the enzyme in this species is believed to be plastoquinone. Couples the redox reaction to proton translocation, and thus conserves the redox energy in a proton gradient. This is NAD(P)H-quinone oxidoreductase subunit 6, chloroplastic (ndhG) from Helianthus annuus (Common sunflower).